The primary structure comprises 182 residues: Dual-action ribosomal maturation protein DarP (182 aa).

The protein belongs to the DarP family.

Its subcellular location is the cytoplasm. Functionally, member of a network of 50S ribosomal subunit biogenesis factors which assembles along the 30S-50S interface, preventing incorrect 23S rRNA structures from forming. Promotes peptidyl transferase center (PTC) maturation. This is Dual-action ribosomal maturation protein DarP from Serratia proteamaculans (strain 568).